We begin with the raw amino-acid sequence, 96 residues long: C-C motif chemokine 20 (96 aa).

Residues 1-26 (MMCSSKNLLLAALMSVLLLHFCSKSE) form the signal peptide. 2 cysteine pairs are disulfide-bonded: cysteine 32–cysteine 58 and cysteine 33–cysteine 74.

Belongs to the intercrine beta (chemokine CC) family.

The protein localises to the secreted. Functionally, acts as a ligand for C-C chemokine receptor CCR6. Signals through binding and activation of CCR6 and induces a strong chemotactic response and mobilization of intracellular calcium ions. The ligand-receptor pair CCL20-CCR6 is responsible for the chemotaxis of dendritic cells (DC), effector/memory T-cells and B-cells and plays an important role at skin and mucosal surfaces under homeostatic and inflammatory conditions, as well as in pathology, including cancer and autoimmune diseases. CCL20 acts as a chemotactic factor that attracts lymphocytes and, slightly, neutrophils, but not monocytes. Involved in the recruitment of both the pro-inflammatory IL17 producing helper T-cells (Th17) and the regulatory T-cells (Treg) to sites of inflammation. Required for optimal migration of thymic natural regulatory T cells (nTregs) and DN1 early thymocyte progenitor cells. Positively regulates sperm motility and chemotaxis via its binding to CCR6 which triggers Ca2+ mobilization in the sperm which is important for its motility. May be involved in formation and function of the mucosal lymphoid tissues by attracting lymphocytes and dendritic cells towards epithelial cells. This chain is C-C motif chemokine 20 (CCL20), found in Bos taurus (Bovine).